The chain runs to 484 residues: Catalase (484 aa).

Residue M53 is modified to Methionine sulfone. Residues H54 and N127 contribute to the active site. Residue Y337 coordinates heme.

In terms of assembly, homotetramer. Heme is required as a cofactor. Requires NADP(+) as cofactor.

The protein localises to the cytoplasm. The catalysed reaction is 2 H2O2 = O2 + 2 H2O. Decomposes hydrogen peroxide into water and oxygen; serves to protect cells from the toxic effects of hydrogen peroxide. In Proteus mirabilis, this protein is Catalase (katA).